The chain runs to 444 residues: Chromosome partition protein MukF (444 aa).

Positions 211-239 (LDETSGNLRELQDTLNAAGDKLQAQLLRI) are leucine-zipper.

Belongs to the MukF family. As to quaternary structure, interacts, and probably forms a ternary complex, with MukE and MukB via its C-terminal region. The complex formation is stimulated by calcium or magnesium. It is required for an interaction between MukE and MukB.

Its subcellular location is the cytoplasm. The protein resides in the nucleoid. Functionally, involved in chromosome condensation, segregation and cell cycle progression. May participate in facilitating chromosome segregation by condensation DNA from both sides of a centrally located replisome during cell division. Not required for mini-F plasmid partitioning. Probably acts via its interaction with MukB and MukE. Overexpression results in anucleate cells. It has a calcium binding activity. This chain is Chromosome partition protein MukF, found in Actinobacillus succinogenes (strain ATCC 55618 / DSM 22257 / CCUG 43843 / 130Z).